The sequence spans 225 residues: Small ribosomal subunit protein uS3 (225 aa).

The KH type-2 domain occupies 16-85 (VCEYVVKETE…TPQIEVKDVK (70 aa)). The segment at 202-225 (EVGTESKADQTDVEGRETGNAEES) is disordered. The span at 205–225 (TESKADQTDVEGRETGNAEES) shows a compositional bias: basic and acidic residues.

Belongs to the universal ribosomal protein uS3 family. In terms of assembly, part of the 30S ribosomal subunit.

Its function is as follows. Binds the lower part of the 30S subunit head. The polypeptide is Small ribosomal subunit protein uS3 (Thermoplasma acidophilum (strain ATCC 25905 / DSM 1728 / JCM 9062 / NBRC 15155 / AMRC-C165)).